The chain runs to 304 residues: GTP cyclohydrolase FolE2 (304 aa).

This sequence belongs to the GTP cyclohydrolase IV family.

The catalysed reaction is GTP + H2O = 7,8-dihydroneopterin 3'-triphosphate + formate + H(+). The protein operates within cofactor biosynthesis; 7,8-dihydroneopterin triphosphate biosynthesis; 7,8-dihydroneopterin triphosphate from GTP: step 1/1. Functionally, converts GTP to 7,8-dihydroneopterin triphosphate. This is GTP cyclohydrolase FolE2 from Hahella chejuensis (strain KCTC 2396).